The primary structure comprises 454 residues: Sensor histidine kinase YkoH (454 aa).

The Cytoplasmic portion of the chain corresponds to 1-12 (MKLKTKIHLYTS). A helical membrane pass occupies residues 13–33 (ISLLILLILVHTAVYLIFSSA). The Extracellular portion of the chain corresponds to 34–153 (LTSKDAARLA…NTEESLFLLK (120 aa)). The helical transmembrane segment at 154–174 (IILIAASAAVCIASFFAGSLL) threads the bilayer. The Cytoplasmic portion of the chain corresponds to 175 to 454 (ARRIINPIRR…QFSEQNGGGR (280 aa)). The HAMP domain occupies 176–230 (RRIINPIRRLMITMKDIQRDKEFKTISLEGQSNDELYQMGLTFNEMAMMLKEHYD). Residues 238-450 (DASHELKTPL…AVTMQFSEQN (213 aa)) form the Histidine kinase domain. A Phosphohistidine; by autocatalysis modification is found at His241.

Its subcellular location is the cell membrane. It catalyses the reaction ATP + protein L-histidine = ADP + protein N-phospho-L-histidine.. In terms of biological role, probable member of the two-component regulatory system YkoH/YkoG. Potentially phosphorylates YkoG. This chain is Sensor histidine kinase YkoH (ykoH), found in Bacillus subtilis (strain 168).